A 468-amino-acid polypeptide reads, in one-letter code: WD repeat-containing protein 55 homolog (468 aa).

The segment at 1–107 is disordered; sequence MRNFNSPKFG…VPKRVIDDYD (107 aa). Composition is skewed to acidic residues over residues 15–26, 41–58, and 67–91; these read DDSDDDDFDSGT, PITEEIEEIEGDDEEYNP, and SDDEDDSDDSDSDKEQENGGEDGED. WD repeat units follow at residues 134–173, 178–217, 221–259, 262–301, 304–343, and 388–427; these read KTEDFVTDLCFHPDQDLLAVGTTTGDVIVYKFTNDECTIV, THTKSVRDVEFNADGDLLISTARDRSIMVTDVETGKLKRF, AHEEPVYTMSMITEHTFATGDDGGVLKLWDLRQKDPVFK, EVEDFISCIITNEQKKYLLMTSGDGYLTTINIPQRKMYVQ, PYEEELTCMGVFRRDSKLVVGSSKGNFYTFNWGQFGYHCD, and QHSLAVETMDINSTGELIASSSHDNDIRFWNIKYFEEFDD.

The protein belongs to the WD repeat WDR55 family.

This Aedes aegypti (Yellowfever mosquito) protein is WD repeat-containing protein 55 homolog.